Consider the following 262-residue polypeptide: Acyl-[acyl-carrier-protein]--UDP-N-acetylglucosamine O-acyltransferase (262 aa).

Belongs to the transferase hexapeptide repeat family. LpxA subfamily. In terms of assembly, homotrimer.

It localises to the cytoplasm. It carries out the reaction a (3R)-hydroxyacyl-[ACP] + UDP-N-acetyl-alpha-D-glucosamine = a UDP-3-O-[(3R)-3-hydroxyacyl]-N-acetyl-alpha-D-glucosamine + holo-[ACP]. It functions in the pathway glycolipid biosynthesis; lipid IV(A) biosynthesis; lipid IV(A) from (3R)-3-hydroxytetradecanoyl-[acyl-carrier-protein] and UDP-N-acetyl-alpha-D-glucosamine: step 1/6. Its function is as follows. Involved in the biosynthesis of lipid A, a phosphorylated glycolipid that anchors the lipopolysaccharide to the outer membrane of the cell. This chain is Acyl-[acyl-carrier-protein]--UDP-N-acetylglucosamine O-acyltransferase, found in Shigella dysenteriae serotype 1 (strain Sd197).